Reading from the N-terminus, the 187-residue chain is GTP cyclohydrolase 1 (187 aa).

Zn(2+)-binding residues include Cys-76, His-79, and Cys-148.

This sequence belongs to the GTP cyclohydrolase I family. Toroid-shaped homodecamer, composed of two pentamers of five dimers.

It carries out the reaction GTP + H2O = 7,8-dihydroneopterin 3'-triphosphate + formate + H(+). Its pathway is cofactor biosynthesis; 7,8-dihydroneopterin triphosphate biosynthesis; 7,8-dihydroneopterin triphosphate from GTP: step 1/1. This is GTP cyclohydrolase 1 from Streptococcus agalactiae serotype III (strain NEM316).